The following is a 79-amino-acid chain: UPF0154 protein llmg_1186 (79 aa).

The helical transmembrane segment at 4 to 24 (ILAILLMVVCLLAGFFLGTWF) threads the bilayer.

It belongs to the UPF0154 family.

The protein localises to the cell membrane. This Lactococcus lactis subsp. cremoris (strain MG1363) protein is UPF0154 protein llmg_1186.